A 471-amino-acid polypeptide reads, in one-letter code: V-type ATP synthase beta chain (471 aa).

The protein belongs to the ATPase alpha/beta chains family.

Functionally, produces ATP from ADP in the presence of a proton gradient across the membrane. The V-type beta chain is a regulatory subunit. This is V-type ATP synthase beta chain from Deinococcus deserti (strain DSM 17065 / CIP 109153 / LMG 22923 / VCD115).